We begin with the raw amino-acid sequence, 134 residues long: Beta-synuclein (134 aa).

2 tandem repeats follow at residues 20–30 and 31–41. Residues 20–67 form a 4 X 11 AA tandem repeats of [EGS]-K-T-K-[EQ]-[GQ]-V-X(4) region; sequence EKTKQGVTEAAEKTKEGVLYVGSKTKEGVVQGVASVAEKTKEQASHLG. Residues 42-56 form a 3; approximate repeat; sequence SKTKEGVVQGVASVA. Copy 4 of the repeat occupies 57–67; sequence EKTKEQASHLG. The segment at 97–134 is disordered; that stretch reads EVAQEAAEEPLIEPLMEPEGESYEEQPQEEYQEYEPEA. Acidic residues predominate over residues 98–134; sequence VAQEAAEEPLIEPLMEPEGESYEEQPQEEYQEYEPEA. Phosphoserine; by BARK1, CK2 and GRK5 is present on serine 118.

The protein belongs to the synuclein family. Post-translationally, phosphorylated. Phosphorylation by G-protein coupled receptor kinases (GRK) is more efficient than phosphorylation by CK1, CK2 and CaM-kinase II. Specifically present in synapses around neurons but not in glial cells.

It is found in the cytoplasm. May be involved in neuronal plasticity. This chain is Beta-synuclein (SNCB), found in Bos taurus (Bovine).